A 512-amino-acid chain; its full sequence is 2,3-bisphosphoglycerate-independent phosphoglycerate mutase (512 aa).

Residues Asp-12 and Ser-62 each coordinate Mn(2+). Residue Ser-62 is the Phosphoserine intermediate of the active site. Substrate contacts are provided by residues His-123, 154 to 155 (RD), Arg-181, Arg-187, 253 to 256 (RPDR), and Lys-336. Positions 403, 407, 444, 445, and 462 each coordinate Mn(2+).

It belongs to the BPG-independent phosphoglycerate mutase family. As to quaternary structure, monomer. Mn(2+) is required as a cofactor.

The enzyme catalyses (2R)-2-phosphoglycerate = (2R)-3-phosphoglycerate. It participates in carbohydrate degradation; glycolysis; pyruvate from D-glyceraldehyde 3-phosphate: step 3/5. Its function is as follows. Catalyzes the interconversion of 2-phosphoglycerate and 3-phosphoglycerate. The protein is 2,3-bisphosphoglycerate-independent phosphoglycerate mutase of Onion yellows phytoplasma (strain OY-M).